The primary structure comprises 247 residues: Lys-63-specific deubiquitinase BRCC36 (247 aa).

Ala-2 is modified (N-acetylalanine). Residues Val-12–Gln-179 form the MPN domain. Residues His-122, His-124, and Asp-135 each contribute to the Zn(2+) site. The JAMM motif signature appears at His-122–Asp-135. Phosphoserine is present on Ser-189.

It belongs to the peptidase M67A family. BRCC36 subfamily. Component of the ARISC complex, at least composed of UIMC1/RAP80, ABRAXAS1, BRCC3/BRCC36, BABAM2 and BABAM1/NBA1. Component of the BRCA1-A complex, at least composed of BRCA1, BARD1, UIMC1/RAP80, ABRAXAS1, BRCC3/BRCC36, BABAM2 and BABAM1/NBA1. In the BRCA1-A complex, interacts directly with ABRAXAS1 and BABAM2. Component of the BRISC complex, at least composed of ABRAXAS2, BRCC3/BRCC36, BABAM2 and BABAM1/NBA1. Identified in a complex with SHMT2 and the other subunits of the BRISC complex. In the BRISC complex, interacts directly with ABRAXAS2. Identified in a complex with ABRAXAS2 and NUMA1. The BRISC complex interacts with the CSN complex. Component of the BRCA1/BRCA2 containing complex (BRCC), which also contains BRCA1, BRCA2, BARD1, BABAM2 and RAD51. BRCC is a ubiquitin E3 ligase complex that enhances cellular survival following DNA damage. Interacts with BRCA1. Binds polyubiquitin. Interacts with PWWP2B. Interacts with HDAC1; this interaction is enhanced in the presence of PWWP2B. The cofactor is Zn(2+).

It is found in the nucleus. The protein resides in the cytoplasm. It localises to the cytoskeleton. Its subcellular location is the spindle pole. Functionally, metalloprotease that specifically cleaves 'Lys-63'-linked polyubiquitin chains. Does not have activity toward 'Lys-48'-linked polyubiquitin chains. Component of the BRCA1-A complex, a complex that specifically recognizes 'Lys-63'-linked ubiquitinated histones H2A and H2AX at DNA lesions sites, leading to target the BRCA1-BARD1 heterodimer to sites of DNA damage at double-strand breaks (DSBs). In the BRCA1-A complex, it specifically removes 'Lys-63'-linked ubiquitin on histones H2A and H2AX, antagonizing the RNF8-dependent ubiquitination at double-strand breaks (DSBs). Catalytic subunit of the BRISC complex, a multiprotein complex that specifically cleaves 'Lys-63'-linked ubiquitin in various substrates. Mediates the specific 'Lys-63'-specific deubiquitination associated with the COP9 signalosome complex (CSN), via the interaction of the BRISC complex with the CSN complex. The BRISC complex is required for normal mitotic spindle assembly and microtubule attachment to kinetochores via its role in deubiquitinating NUMA1. Plays a role in interferon signaling via its role in the deubiquitination of the interferon receptor IFNAR1; deubiquitination increases IFNAR1 activity by enhancing its stability and cell surface expression. Acts as a regulator of the NLRP3 inflammasome by mediating deubiquitination of NLRP3, leading to NLRP3 inflammasome assembly. Down-regulates the response to bacterial lipopolysaccharide (LPS) via its role in IFNAR1 deubiquitination. Deubiquitinates HDAC1 and PWWP2B leading to their stabilization. This Pongo abelii (Sumatran orangutan) protein is Lys-63-specific deubiquitinase BRCC36 (BRCC3).